We begin with the raw amino-acid sequence, 353 residues long: Protein RecA (353 aa).

An ATP-binding site is contributed by 67–74 (GPESSGKT).

Belongs to the RecA family.

The protein localises to the cytoplasm. Its function is as follows. Can catalyze the hydrolysis of ATP in the presence of single-stranded DNA, the ATP-dependent uptake of single-stranded DNA by duplex DNA, and the ATP-dependent hybridization of homologous single-stranded DNAs. It interacts with LexA causing its activation and leading to its autocatalytic cleavage. The protein is Protein RecA of Salmonella paratyphi A (strain ATCC 9150 / SARB42).